Reading from the N-terminus, the 879-residue chain is Metabotropic glutamate receptor 3 (879 aa).

Positions 1–22 are cleaved as a signal peptide; it reads MKMLTRLQVLMLALFSKGFLVS. Topologically, residues 23 to 576 are extracellular; that stretch reads LGDHNFMRRE…EDYIRWEDAW (554 aa). Cys57 and Cys99 form a disulfide bridge. Residues Ser151 and 172 to 174 contribute to the L-glutamate site; that span reads AST. Asn209 carries an N-linked (GlcNAc...) asparagine glycan. Residue Tyr222 participates in L-glutamate binding. 7 disulfide bridges follow: Cys240-Cys527, Cys361-Cys373, Cys412-Cys419, Cys509-Cys528, Cys513-Cys531, Cys534-Cys546, and Cys549-Cys562. Residue Asn292 is glycosylated (N-linked (GlcNAc...) asparagine). Position 301 (Asp301) interacts with L-glutamate. Lys389 contacts L-glutamate. Residues Asn414 and Asn439 are each glycosylated (N-linked (GlcNAc...) asparagine). The chain crosses the membrane as a helical span at residues 577-599; the sequence is AIGPVTIACLGFMCTCIVITVFI. The Cytoplasmic segment spans residues 600–613; it reads KHNNTPLVKASGRE. The helical transmembrane segment at 614–634 threads the bilayer; it reads LCYILLFGVSLSYCMTFFFIA. The Extracellular portion of the chain corresponds to 635-645; sequence KPSPVICALRR. Residues 646 to 664 form a helical membrane-spanning segment; that stretch reads LGLGTSFAICYSALLTKTN. Topologically, residues 665–688 are cytoplasmic; it reads CIARIFDGVKNGAQRPKFISPSSQ. The chain crosses the membrane as a helical span at residues 689–709; that stretch reads VFICLGLILVQIVMVSVWLIL. The Extracellular segment spans residues 710 to 734; sequence ETPGTRRYTLPEKRETVILKCNVKD. Residues 735 to 756 form a helical membrane-spanning segment; sequence SSMLISLTYDVVLVILCTVYAF. At 757-769 the chain is on the cytoplasmic side; the sequence is KTRKCPENFNEAK. A helical transmembrane segment spans residues 770-792; it reads FIGFTMYTTCIIWLAFLPIFYVT. The Extracellular segment spans residues 793 to 802; sequence SSDYRVQTTT. A helical transmembrane segment spans residues 803-828; the sequence is MCISVSLSGFVVLGCLFAPKVHIVLF. Residues 829-879 lie on the Cytoplasmic side of the membrane; that stretch reads QPQKNVVTHRLHLNRFSVSGTATTYSQSSASTYVPTVCNGREVLDSTTSSL.

This sequence belongs to the G-protein coupled receptor 3 family. Interacts with TAMALIN.

It is found in the cell membrane. Its function is as follows. G-protein coupled receptor for glutamate. Ligand binding causes a conformation change that triggers signaling via guanine nucleotide-binding proteins (G proteins) and modulates the activity of down-stream effectors. Signaling inhibits adenylate cyclase activity. In Mus musculus (Mouse), this protein is Metabotropic glutamate receptor 3 (Grm3).